Consider the following 471-residue polypeptide: Proline--tRNA ligase (471 aa).

This sequence belongs to the class-II aminoacyl-tRNA synthetase family. ProS type 3 subfamily. Homodimer.

It localises to the cytoplasm. It catalyses the reaction tRNA(Pro) + L-proline + ATP = L-prolyl-tRNA(Pro) + AMP + diphosphate. Functionally, catalyzes the attachment of proline to tRNA(Pro) in a two-step reaction: proline is first activated by ATP to form Pro-AMP and then transferred to the acceptor end of tRNA(Pro). This chain is Proline--tRNA ligase, found in Archaeoglobus fulgidus (strain ATCC 49558 / DSM 4304 / JCM 9628 / NBRC 100126 / VC-16).